The following is a 98-amino-acid chain: Large ribosomal subunit protein bL28 (98 aa).

The protein belongs to the bacterial ribosomal protein bL28 family.

This chain is Large ribosomal subunit protein bL28, found in Phenylobacterium zucineum (strain HLK1).